We begin with the raw amino-acid sequence, 216 residues long: Uracil phosphoribosyltransferase (216 aa).

5-phospho-alpha-D-ribose 1-diphosphate contacts are provided by residues R85, R110, and 135–143 (DPMVATGYS). Residues I200 and 205-207 (GDA) each bind uracil. D206 lines the 5-phospho-alpha-D-ribose 1-diphosphate pocket.

It belongs to the UPRTase family. It depends on Mg(2+) as a cofactor.

The catalysed reaction is UMP + diphosphate = 5-phospho-alpha-D-ribose 1-diphosphate + uracil. It participates in pyrimidine metabolism; UMP biosynthesis via salvage pathway; UMP from uracil: step 1/1. With respect to regulation, allosterically activated by GTP. Functionally, catalyzes the conversion of uracil and 5-phospho-alpha-D-ribose 1-diphosphate (PRPP) to UMP and diphosphate. The sequence is that of Uracil phosphoribosyltransferase from Burkholderia thailandensis (strain ATCC 700388 / DSM 13276 / CCUG 48851 / CIP 106301 / E264).